The following is a 334-amino-acid chain: WD repeat domain 54 (334 aa).

WD repeat units follow at residues glycine 162 to threonine 206, isoleucine 208 to glutamine 247, and alanine 250 to serine 289.

As to quaternary structure, homodimer and homotrimer; forms tight forms of dimers and trimers. Interacts with IZUMO1 and IZUMO1R/JUNO. Post-translationally, cross-linked to tightly form both dimers and trimers by TGM2. Cross-linking enhances the activation of EGF receptor-mediated signaling pathway. Cross-linking is inhibited by EGF. Ubiquitinated. EGF increases ubiquitination. In terms of tissue distribution, widely expressed in the ovary and testis (at protein level).

It is found in the vesicle. It localises to the cytoplasm. The protein resides in the cell membrane. Functionally, plays a role in the adhesion and fusion of the sperm-oocyte membrane through its interactions with IZUMO1 and IZUMO1R/JUNO. When cross-linked to form dimers and trimers, it has a regulatory effect on ERK signaling pathway activity in response to EGF stimulation. Colocalizes with the EGF receptor in WDR54-specific vesicle where it sustains the internalization and controls the degradation of the EGF receptor after EGF stimulation. The chain is WD repeat domain 54 (Wdr54) from Rattus norvegicus (Rat).